Here is a 767-residue protein sequence, read N- to C-terminus: Protein transport protein Sec23B (767 aa).

Ala2 is modified (N-acetylalanine). Zn(2+) is bound by residues Cys61, Cys66, Cys85, and Cys88. Lys564 is modified (N6-acetyllysine). One copy of the Gelsolin-like repeat lies at 634 to 720 (PEPVLLDSSS…EHGGSQARFL (87 aa)).

The protein belongs to the SEC23/SEC24 family. SEC23 subfamily. COPII is composed of at least five proteins: the Sec23/24 complex, the Sec13/31 complex and Sar1. Interacts with SAR1A. As to expression, ubiquitously expressed.

The protein resides in the cytoplasmic vesicle. The protein localises to the COPII-coated vesicle membrane. Its subcellular location is the endoplasmic reticulum membrane. It localises to the cytoplasm. It is found in the cytosol. In terms of biological role, component of the coat protein complex II (COPII) which promotes the formation of transport vesicles from the endoplasmic reticulum (ER). The coat has two main functions, the physical deformation of the endoplasmic reticulum membrane into vesicles and the selection of cargo molecules for their transport to the Golgi complex. The sequence is that of Protein transport protein Sec23B from Homo sapiens (Human).